The sequence spans 645 residues: Sodium/potassium/calcium exchanger 3 (645 aa).

A signal peptide spans 1–43 (MPPPGDQDCARRRSRRRRRDLLLSQLCFLASVALLLWSLSSLR). At 44-106 (EQKELDLMDL…DIFSNEDRRQ (63 aa)) the chain is on the extracellular side. N-linked (GlcNAc...) asparagine glycans are attached at residues Asn70 and Asn85. Residues 107 to 127 (GAVVLHVLCAMYMFYALAIVC) form a helical membrane-spanning segment. Residues 128-151 (DDFFVPSLEKICERLHLSEDVAGA) lie on the Cytoplasmic side of the membrane. Residues 148–188 (VAGATFMAAGSSAPELFTSVIGVFITKGDVGVGTIVGSAVF) form an Alpha-1 repeat. Residues 152-172 (TFMAAGSSAPELFTSVIGVFI) traverse the membrane as a helical segment. Residues 173-181 (TKGDVGVGT) are Extracellular-facing. The helical transmembrane segment at 182–202 (IVGSAVFNILCIIGVCGLFAG) threads the bilayer. At 203–209 (QVVALSS) the chain is on the cytoplasmic side. A helical membrane pass occupies residues 210-230 (WCLLRDSIYYTLSVVALIVFI). Residues 231-234 (YDEK) lie on the Extracellular side of the membrane. The helical transmembrane segment at 235-255 (VSWWESLVLVLMYLIYIVIMK) threads the bilayer. The Cytoplasmic portion of the chain corresponds to 256 to 486 (YNACIHQCFE…WFMVTFASST (231 aa)). At Ser307 the chain carries Phosphoserine. 2 disordered regions span residues 379 to 398 (TVEN…NGTR) and 404 to 442 (AETD…PFDP). Acidic residues predominate over residues 404-435 (AETDNETENENEDNENNENDEEEEEDEDDDEG). The chain crosses the membrane as a helical span at residues 487–507 (LWIAAFSYMMVWMVTIIGYTL). Residues 508 to 512 (GIPDV) are Extracellular-facing. Residues 513 to 533 (IMGITFLAAGTSVPDCMASLI) traverse the membrane as a helical segment. The Alpha-2 repeat unit spans residues 520-551 (AAGTSVPDCMASLIVARQGMGDMAVSNSIGSN). Residues 534-551 (VARQGMGDMAVSNSIGSN) lie on the Cytoplasmic side of the membrane. The chain crosses the membrane as a helical span at residues 552-572 (VFDILIGLGLPWALQTLAVDY). Residues 573-582 (GSYIRLNSRG) lie on the Extracellular side of the membrane. The chain crosses the membrane as a helical span at residues 583 to 603 (LIYSVGLLLASVFVTVFGVHL). Topologically, residues 604 to 617 (NKWQLDKKLGCGCL) are cytoplasmic. The helical transmembrane segment at 618-638 (FLYGVFLCFSIMTEFNVFTFV) threads the bilayer. Residues 639 to 645 (NLPMCGD) are Extracellular-facing.

Belongs to the Ca(2+):cation antiporter (CaCA) (TC 2.A.19) family. SLC24A subfamily. As to expression, abundant in the brain. Highest levels found in selected thalamic nuclei, hippocampal CA1 neurons and in layer IV of the cerebral cortex. Expressed in dental tissues.

Its subcellular location is the cell membrane. The enzyme catalyses Ca(2+)(out) + K(+)(out) + 4 Na(+)(in) = Ca(2+)(in) + K(+)(in) + 4 Na(+)(out). Calcium, potassium:sodium antiporter that transports 1 Ca(2+) and 1 K(+) in exchange for 4 Na(+). This Mus musculus (Mouse) protein is Sodium/potassium/calcium exchanger 3 (Slc24a3).